A 462-amino-acid polypeptide reads, in one-letter code: Nucleolar protein 12 (462 aa).

2 disordered regions span residues 24 to 148 and 191 to 215; these read LFSK…ESES and KDPR…SKTK. A compositionally biased stretch (acidic residues) spans 47–59; it reads PEQDKDEQEEENV. Residues 108–124 are compositionally biased toward basic and acidic residues; the sequence is GDSKSKDEPKDEPKDDS. The span at 125–134 shows a compositional bias: acidic residues; sequence SDSDNEDEAT. A compositionally biased stretch (polar residues) spans 137 to 146; the sequence is DKSSITGTES. Residues 198–211 show a composition bias toward acidic residues; the sequence is DDHDDGEEDEEEEE. In terms of domain architecture, RRM spans 297-378; it reads RSVFVGNLDF…RKLRISRCKN (82 aa). Disordered regions lie at residues 381–400 and 432–462; these read KAQG…QQRT and ETTP…QNAQ. Residues 383–397 are compositionally biased toward polar residues; the sequence is QGNQSSLQNNKLNDQ. Residues 438–455 are compositionally biased toward basic residues; that stretch reads KRTKNRSKTGRVTKRSIA.

Belongs to the RRM RBM34 family.

It localises to the nucleus. The protein resides in the nucleolus. Functionally, involved in pre-25S rRNA processing. The chain is Nucleolar protein 12 (NOP12) from Kluyveromyces lactis (strain ATCC 8585 / CBS 2359 / DSM 70799 / NBRC 1267 / NRRL Y-1140 / WM37) (Yeast).